Consider the following 2407-residue polypeptide: Daf-12-interacting protein 1 (2407 aa).

Over residues 90 to 112 the composition is skewed to low complexity; the sequence is QNSSMASMSSTPSSGQSSSPRNA. Residues 90-152 form a disordered region; that stretch reads QNSSMASMSS…PHLSVQSQQR (63 aa). An RRM domain is found at 277 to 335; sequence CSVHVPHLDRHSPDHYRRRFESYGQVIDVDMVKSNDNKAFAVVQFTNIDDAQKALQDTN. 11 disordered regions span residues 439-632, 737-767, 785-849, 874-896, 921-986, 993-1012, 1025-1844, 1858-1918, 1932-1976, 2077-2103, and 2172-2200; these read EVAA…LELD, ATDS…TNRL, LCIG…GRPA, PTHD…ETMV, LIAA…PSNA, RSQS…TPVV, SNQP…EDSE, IAQE…VNNH, LQPA…QQSD, EENE…LAAA, and SIQR…VNQN. Positions 443–456 are enriched in polar residues; it reads RSSSPTSKSENDQG. Residues 512–529 are compositionally biased toward acidic residues; it reads EDSDEQNDVDEEDDEDVV. Basic and acidic residues-rich tracts occupy residues 530 to 541, 548 to 564, and 573 to 586; these read SEEKRHEPEEGK, GHRD…DSSE, and SHHE…KDSE. Polar residues predominate over residues 587-603; the sequence is AYQSRSFSPLNYQSQSP. Residues 618–627 show a composition bias toward low complexity; sequence SPTTSSASSS. Composition is skewed to polar residues over residues 791 to 826 and 837 to 849; these read TPST…TPRS and SRHN…GRPA. The span at 924 to 946 shows a compositional bias: polar residues; sequence ATSTGTHSVSSSAHSTPRHSISG. The segment covering 966-978 has biased composition (basic and acidic residues); the sequence is SRPEKVQIRHDTI. Over residues 1043 to 1052 the composition is skewed to polar residues; sequence SALQNIQNHQ. Over residues 1053-1070 the composition is skewed to low complexity; that stretch reads PPHSNANSTPSTPSTSTH. Positions 1086–1153 are enriched in basic and acidic residues; it reads KEKEEREREA…KVRKKAEKEK (68 aa). The span at 1165–1177 shows a compositional bias: acidic residues; it reads SDESDSDSNDELD. Composition is skewed to basic and acidic residues over residues 1178–1195, 1218–1227, 1279–1293, 1304–1320, 1335–1355, and 1376–1398; these read LDVR…KDHQ, RAHDSFEKMQ, ADQR…EKGE, NDAG…DREN, QGER…DAAA, and RRSS…PHED. 2 stretches are compositionally biased toward low complexity: residues 1456–1471 and 1488–1498; these read PKHL…TKRS and TTSSTSTATTS. Residues 1534-1547 show a composition bias toward polar residues; sequence SMNSAADSPMSTTG. Residues 1570–1595 are compositionally biased toward low complexity; that stretch reads SSSGQHDSSSGSSSDSSSSDGSTSSD. Basic and acidic residues-rich tracts occupy residues 1679–1691 and 1703–1726; these read SEEH…HGDS and EHQE…HEEQ. The segment covering 1749 to 1770 has biased composition (polar residues); it reads TQAQEKSAHTLISDQETDQAVQ. Over residues 1792-1805 the composition is skewed to basic and acidic residues; the sequence is NEKEVSGKDPHNIK. The segment covering 1809-1826 has biased composition (polar residues); sequence PLNNGHTDLLFSPSSSAH. Composition is skewed to basic and acidic residues over residues 1827 to 1836 and 1873 to 1892; these read ASEKQSTKSE and EEVK…KMEE. Polar residues-rich tracts occupy residues 1895 to 1911 and 1932 to 1942; these read EQTP…SQDT and LQPASQHQVAQ. Over residues 1962-1975 the composition is skewed to low complexity; sequence SQQSQPSPMSSQQS. Positions 2049–2110 form a coiled coil; it reads NQMMQAKMKQ…AAATAAATMA (62 aa). Residues 2077–2099 are compositionally biased toward basic and acidic residues; sequence EENERKVEEDRREKQRKEEERQR. Positions 2176 to 2186 are enriched in low complexity; sequence PSSTASTSSNP. Residues 2213 to 2383 form the SPOC domain; sequence QRWFYKHFPM…TRYLLIVFTN (171 aa).

Isoform d interacts with daf-12. Isoform d is widely expressed: detected in the hypodermis, seam cells, intestine, somatic gonad, neurons, vulval precursors, body wall muscle and pharynx.

Its subcellular location is the nucleus. Probable transcriptional corepressor which modulates activity of the nuclear hormone receptor daf-12 to regulate the dauer diapause. This Caenorhabditis elegans protein is Daf-12-interacting protein 1.